The primary structure comprises 414 residues: Eukaryotic initiation factor 4A-1 (414 aa).

A Q motif motif is present at residues E41–Q69. A Helicase ATP-binding domain is found at I72–I242. A85–T92 is an ATP binding site. A DEAD box motif is present at residues D190–D193. The Helicase C-terminal domain maps to G253–L414.

The protein belongs to the DEAD box helicase family. eIF4A subfamily. EIF4F is a multi-subunit complex, the composition of which varies with external and internal environmental conditions. It is composed of at least EIF4A, EIF4E and EIF4G.

The catalysed reaction is ATP + H2O = ADP + phosphate + H(+). Its function is as follows. ATP-dependent RNA helicase which is a subunit of the eIF4F complex involved in cap recognition and is required for mRNA binding to ribosome. In the current model of translation initiation, eIF4A unwinds RNA secondary structures in the 5'-UTR of mRNAs which is necessary to allow efficient binding of the small ribosomal subunit, and subsequent scanning for the initiator codon. The chain is Eukaryotic initiation factor 4A-1 from Oryza sativa subsp. japonica (Rice).